A 270-amino-acid chain; its full sequence is A-type potassium channel modulatory protein KCNIP2 (270 aa).

A compositionally biased stretch (basic and acidic residues) spans 1 to 17 (MRGQGRKESLSDSRDLD). A disordered region spans residues 1 to 32 (MRGQGRKESLSDSRDLDGSYDQLTGHPPGPTK). S9 is modified (phosphoserine). Residues C45 and C46 are each lipidated (S-palmitoyl cysteine). An EF-hand 1; degenerate domain is found at 81–137 (FELSTVCHRPEGLEQLQEQTKFTRKELQVLYRGFKNECPSGIVNEENFKQIYSQFFP). 3 EF-hand domains span residues 140–175 (DSST…ILRG), 176–211 (TVDD…IYDM), and 224–259 (APRE…DENI). Ca(2+)-binding residues include D153, N155, D157, S159, D164, D189, N191, D193, C195, E200, D237, N239, D241, and E248. The segment at 257–270 (ENIMRSMQLFDNVI) is interaction with KCND2.

The protein belongs to the recoverin family. In terms of assembly, component of heteromultimeric potassium channels. Identified in potassium channel complexes containing KCND1, KCND2, KCND3, KCNIP1, KCNIP2, KCNIP3, KCNIP4, DPP6 and DPP10. The KCND2-KCNIP2 channel complex contains four KCND2 and four KCNIP2 subunits. Interacts with KCND2. Probably part of a complex consisting of KCNIP1, KCNIP2 isoform 3 and KCND2. At least isoform 2 and isoform 3 can self-associate to form homodimers and homotetramers. Isoform 3 interacts with KCNIP1 in a calcium-dependent manner. Interacts with KCND3; each KCNIP2 monomer interacts with two adjacent KCND3 subunits, through both the N-terminal inactivation ball of a KCND3 subunit and a C-terminal helix from the adjacent KCND3 subunit, clamping them together; this interaction modulates the channel gating kinetics. Post-translationally, palmitoylated. Palmitoylation enhances association with the plasma membrane. Expressed in brain. Colocalizes with KCND2 in excitatory neurons including cortical and hippocampal CA1 pyramidal cells. Isoform 3 is expressed in heart and in umbilical vein endothelial cells. Not expressed in fetal heart.

The protein resides in the cell membrane. In terms of biological role, regulatory subunit of Kv4/D (Shal)-type voltage-gated rapidly inactivating A-type potassium channels. Modulates channel density, inactivation kinetics and rate of recovery from inactivation in a calcium-dependent and isoform-specific manner. Involved in KCND2 and KCND3 trafficking to the cell surface. May be required for the expression of I(To) currents in the heart. The chain is A-type potassium channel modulatory protein KCNIP2 from Homo sapiens (Human).